The primary structure comprises 1072 residues: Neurofilament heavy polypeptide (1072 aa).

Position 74 is a phosphoserine (Ser74). An IF rod domain is found at 94 to 409 (EKEQLQALND…KLLEGEECRI (316 aa)). Coiled coils occupy residues 98–132 (LQAL…LRQQ), 174–222 (IAHV…LQEE), and 293–380 (LDRL…QLRE). The interval 278 to 643 (TVQSTLQSEE…AKSPAEAKSP (366 aa)) is 55 X 6 AA approximate tandem repeats of K-S-P-[VAGSE]-[KEVTSGA]-[EAVK]. Phosphoserine is present on residues Ser343, Ser414, and Ser417. The disordered stretch occupies residues 454–1072 (EEQTEEIQVT…PEDKAAKGDK (619 aa)). The segment covering 455–487 (EQTEEIQVTEEVTEEEDKEAQGEEEEEAEEGGE) has biased composition (acidic residues). Low complexity predominate over residues 488 to 499 (EAATTSPPAEEA). Ser501 carries the phosphoserine modification. Residues 501–584 (SPEKETKSPV…KSPAEAKSPA (84 aa)) show a composition bias toward basic and acidic residues. 36 consecutive repeat copies span residues 507-512 (KSPVKE), 515-520 (KSPAEA), 521-526 (KSPAEA), 527-532 (KSPAEA), 533-538 (KSPAEV), 539-544 (KSPAEV), 545-550 (KSPAEA), 551-556 (KSPAEA), 557-562 (KSPAEV), 563-568 (KSPAEV), 569-574 (KSPAEA), 575-580 (KSPAEA), 581-586 (KSPAEV), 587-592 (KSPATV), 593-598 (KSPGEA), 599-604 (KSPAEA), 605-610 (KSPAEV), 611-616 (KSPVEA), 617-622 (KSPAEA), 623-628 (KSPASV), 629-634 (KSPGEA), 635-640 (KSPAEA), 641-646 (KSPAEV), 647-652 (KSPATV), 653-658 (KSPVEA), 659-664 (KSPAEV), 665-670 (KSPVTV), 671-676 (KSPAEA), 677-682 (KSPVEV), 683-688 (KSPASV), 689-694 (KSPSEA), 695-700 (KSPAGA), 701-706 (KSPAEA), 707-712 (KSPVVA), 713-718 (KSPAEA), and 719-724 (KSPAEA). A phosphoserine mark is found at Ser516, Ser522, Ser528, Ser534, Ser540, Ser546, Ser552, Ser558, Ser564, Ser570, Ser576, Ser582, Ser588, Ser594, Ser600, Ser606, Ser612, Ser618, Ser624, Ser627, Ser630, Ser636, Ser642, Ser648, Ser654, Ser660, Ser666, Ser672, Ser678, Ser684, Ser687, Ser690, Ser696, Ser702, Ser708, Ser714, and Ser720. A compositionally biased stretch (basic and acidic residues) spans 600–620 (SPAEAKSPAEVKSPVEAKSPA). The segment covering 621–631 (EAKSPASVKSP) has biased composition (low complexity). Residues 720-774 (SPAEAKPPAEAKSPAEAKSPAEAKSPAEAKSPAEAKSPVEVKSPEKAKSPVKEGA) show a composition bias toward basic and acidic residues. The stretch at 725–730 (KPPAEA) is one 37; approximate repeat. A run of 7 repeats spans residues 731–736 (KSPAEA), 737–742 (KSPAEA), 743–748 (KSPAEA), 749–754 (KSPAEA), 755–760 (KSPVEV), 761–766 (KSPEKA), and 767–772 (KSPVKE). Ser732, Ser738, Ser744, Ser750, Ser756, and Ser762 each carry phosphoserine. The 45; approximate repeat unit spans residues 775–780 (KSLAEA). Ser776, Ser782, and Ser788 each carry phosphoserine. 2 consecutive repeat copies span residues 781 to 786 (KSPEKA) and 787 to 792 (KSPVKE). 2 stretches are compositionally biased toward basic and acidic residues: residues 781-953 (KSPE…KAAA) and 963-1072 (GVKE…KGDK). The 48; approximate repeat unit spans residues 795-800 (KPPAEV). A run of 4 repeats spans residues 801 to 806 (KSPEKA), 807 to 812 (KSPMKE), 815 to 820 (KSPEKA), and 826 to 831 (KSPEAK). 4 positions are modified to phosphoserine: Ser802, Ser808, Ser816, and Ser827. Thr832 carries the phosphothreonine modification. Ser846, Ser852, Ser860, Ser880, and Ser937 each carry phosphoserine. A run of 3 repeats spans residues 851–856 (KSPAKE), 859–864 (KSPEKE), and 879–884 (KSPVEE).

This sequence belongs to the intermediate filament family. Forms heterodimers with NEFL; which can further hetero-oligomerize (in vitro). Forms heterodimers with INA (in vitro). There are a number of repeats of the tripeptide K-S-P, NFH is phosphorylated on a number of the serines in this motif. It is thought that phosphorylation of NFH results in the formation of interfilament cross bridges that are important in the maintenance of axonal caliber. Post-translationally, phosphorylation seems to play a major role in the functioning of the larger neurofilament polypeptides (NF-M and NF-H), the levels of phosphorylation being altered developmentally and coincidentally with a change in the neurofilament function. In terms of processing, phosphorylated in the head and rod regions by the PKC kinase PKN1, leading to the inhibition of polymerization. Expressed in the dorsal root ganglion neurons (at protein level). Expressed in cutaneous and muscular sensory neurons.

The protein localises to the cytoplasm. Its subcellular location is the cytoskeleton. The protein resides in the cell projection. It localises to the axon. Neurofilaments usually contain three intermediate filament proteins: NEFL, NEFM, and NEFH which are involved in the maintenance of neuronal caliber. NEFH has an important function in mature axons that is not subserved by the two smaller NEF proteins. May additionally cooperate with the neuronal intermediate filament proteins PRPH and INA to form neuronal filamentous networks. The sequence is that of Neurofilament heavy polypeptide (Nefh) from Rattus norvegicus (Rat).